The following is a 333-amino-acid chain: Protoheme IX farnesyltransferase (333 aa).

Residues 1–13 are compositionally biased toward low complexity; the sequence is MVSSTSQIISTSP. The interval 1 to 21 is disordered; that stretch reads MVSSTSQIISTSPSRDDVVPS. Transmembrane regions (helical) follow at residues 38–58, 63–83, 109–129, 132–152, 160–180, 188–208, 245–265, and 286–306; these read LIPL…GWPL, LACT…LNCL, AVFT…VSGV, LAAG…TAFL, IVIG…AATG, WLFA…AILL, CFGV…LVPF, and AKGL…LLVV.

It belongs to the UbiA prenyltransferase family. Protoheme IX farnesyltransferase subfamily.

The protein resides in the cell inner membrane. The enzyme catalyses heme b + (2E,6E)-farnesyl diphosphate + H2O = Fe(II)-heme o + diphosphate. Its pathway is porphyrin-containing compound metabolism; heme O biosynthesis; heme O from protoheme: step 1/1. Functionally, converts heme B (protoheme IX) to heme O by substitution of the vinyl group on carbon 2 of heme B porphyrin ring with a hydroxyethyl farnesyl side group. The protein is Protoheme IX farnesyltransferase of Prochlorococcus marinus (strain SARG / CCMP1375 / SS120).